We begin with the raw amino-acid sequence, 122 residues long: Large ribosomal subunit protein uL14c (122 aa).

It belongs to the universal ribosomal protein uL14 family. As to quaternary structure, part of the 50S ribosomal subunit.

It is found in the plastid. It localises to the chloroplast. Binds to 23S rRNA. This is Large ribosomal subunit protein uL14c from Pleurastrum terricola (Filamentous green alga).